Consider the following 419-residue polypeptide: MELKVWVDGVQRIVCGVTEVTTCQEVVIALAQAIGRTGRYTLIEKWRDTERHLAPHENPIVSLNKWGQYASDVQLILRRTGPSLSERPTSDSVARIPERTLYRQSLPPLAKLRPQADKSIRRREPKRKSLTFTGGAKGLTDIFGKGKETEFRQKVLSNCRATAEELKRLIRLQTGKLQAIEKQLESSEAEIRFWEQKYSCSLEEEIVRLEQRIKRNDVEIEEEEFWENELQIEQENEKQLQDQLEEIRQKVTDCEGRLKDYLAQIHTMESGLQAEKLHREVQEAQVNEEEVKGKIEKVKGEMDLQGQQSLRLENGIRAVERSLGQATKRLQDKEQELEQLTKELRQVNLQQFIQQTGTKVTVLPAEPTEIEASQADIETEAPFQSGSLKRPGSSRQLPSNLRILQNPVSSGFNPEGIYV.

The Ras-associating domain occupies 1–82 (MELKVWVDGV…VQLILRRTGP (82 aa)). Phosphoserine occurs at positions 105 and 129. The residue at position 131 (threonine 131) is a Phosphothreonine. The segment at 372-399 (ASQADIETEAPFQSGSLKRPGSSRQLPS) is disordered. Residues 382–399 (PFQSGSLKRPGSSRQLPS) are compositionally biased toward polar residues. Serine 387 carries the post-translational modification Phosphoserine.

The polypeptide is Ras association domain-containing protein 8 (Rassf8) (Mus musculus (Mouse)).